The chain runs to 83 residues: U-actitoxin-Aeq6a (83 aa).

Positions 1–20 (MIYKAVFVCLVLVLLGDVFC) are cleaved as a signal peptide. The propeptide occupies 21 to 36 (SPRNSGGGTLNDNPFE). Proline 82 is subject to Proline amide.

In terms of processing, contains 3 disulfide bonds. As to expression, expressed by acrorhagi.

The protein resides in the secreted. The protein localises to the nematocyst. Its function is as follows. Toxin. This is U-actitoxin-Aeq6a from Actinia equina (Beadlet anemone).